Here is a 252-residue protein sequence, read N- to C-terminus: Isoprenyl transferase (252 aa).

Aspartate 32 is an active-site residue. Aspartate 32 is a binding site for Mg(2+). Substrate contacts are provided by residues 33 to 36 (GNGR), tryptophan 37, arginine 45, histidine 49, and 77 to 79 (STE). The Proton acceptor role is filled by asparagine 80. Residues tryptophan 81, arginine 83, arginine 200, and 206-208 (RLS) contribute to the substrate site. Glutamate 219 is a binding site for Mg(2+).

This sequence belongs to the UPP synthase family. In terms of assembly, homodimer. Mg(2+) serves as cofactor.

Catalyzes the condensation of isopentenyl diphosphate (IPP) with allylic pyrophosphates generating different type of terpenoids. The chain is Isoprenyl transferase from Listeria monocytogenes serovar 1/2a (strain ATCC BAA-679 / EGD-e).